We begin with the raw amino-acid sequence, 2494 residues long: MEKVHVDLDADSPFVKSLQRCFPHFEIEATQVTDNDHANARAFSHLATKLIEGEVDTDQVILDIGSAPVRHTHSKHKYHCICPMKSAEDPDRLYRYADKLRKSDVTDKCIASKAADLLTVMSTPDAETPSLCMHTDSTCRYHGSVAVYQDVYAVHAPTSIYYQALKGVRTIYWIGFDTTPFMYKNMAGAYPTYNTNWADESVLEARNIGLGSSDLHEKSFGKVSIMRKKKLQPTNKVIFSVGSTIYTEERILLRSWHLPNVFHLKGKTSFTGRCNTIVSCEGYVVKKITLSPGIYGKVDNLASTMHREGFLSCKVTDTLRGERVSFPVCTYVPATLCDQMTGILATDVSVDDAQKLLVGLNQRIVVNGRTQRNTNTMQNYLLPVVAQAFSRWAREHRADLEDEKGLGVRERSLVMGCCWAFKTHKITSIYKRPGTQTIKKVPAVFNSFVIPQPTSYGLDIGLRRRIKMLFDAKKAPAPIITEADVAHLKGLQDEAEAVAEAEAVRAALPPLLPEVDKETVEADIDLIMQEAGAGSVETPRRHIKVTTYPGEEMIGSYAVLSPQAVLNSEKLACIHPLAEQVLVMTHKGRAGRYKVEPYHGRVIVPSGTAIPILDFQALSESATIVFNEREFVNRYLHHIAVNGGALNTDEEYYKVVKSTETDSEYVFDIDAKKCVKKGDAGPMCLVGELVDPPFHEFAYESLKTRPAAPHKVPTIGVYGVPGSGKSGIIKSAVTKRDLVVSAKKENCMEIIKDVKRMRGMDIAARTVDSVLLNGVKHSVDTLYIDEAFACHAGTLLALIAIVKPKKVVLCGDPKQCGFFNMMCLKVHFNHEICTEVYHKSISRRCTKTVTSIVSTLFYDKRMRTVNPCNDKIIIDTTSTTKPLKDDIILTCFRGWVKQLQIDYKNHEIMTAAASQGLTRKGVYAVRYKVNENPLYAQTSEHVNVLLTRTEKRIVWKTLAGDPWIKTLTASYPGNFTATLEEWQAEHDAIMAKILETPASSDVFQNKVNVCWAKALEPVLATANITLTRSQWETIPAFKDDKAYSPEMALNFFCTRFFGVDIDSGLFSAPTVPLTYTNEHWDNSPGPNMYGLCMRTAKELARRYPCILKAVDTGRVADVRTDTIKDYNPLINVVPLNRRLPHSLVVTHRYTGNGDYSQLVTKMTGKTVLVVGTPMNIPGKRVETLGPSPQCTYKAELDLGIPAALGKYDIIFINVRTPYRHHHYQQCEDHAIHHSMLTRKAVDHLNKGGTCIALGYGTADRATENIISAVARSFRFSRVCQPKCAWENTEVAFVFFGKDNGNHLQDQDRLSVVLNNIYQGSTQHEAGRAPAYRVVRGDITKSNDEVIVNAANNKGQPGSGVCGALYRKWPGAFDKQPVATGKAHLVKHSPNVIHAVGPNFSRLSENEGDQKLSEVYMDIARIINNERFTKVSIPLLSTGIYAGGKDRVMQSLNHLFTAMDTTDADITIYCLDKQWESRIKEAITRKESVEELTEDDRPVDIELVRVHPLSSLAGRPGYSTTEGKVYSYLEGTRFHQTAKDIAEIYAMWPNKQEANEQICLYVLGESMNSIRSKCPVEESEASSPPHTIPCLCNYAMTAERVYRLRMAKNEQFAVCSSFQLPKYRITGVQKIQCSKPVIFSGTVPPAIHPRKFASVTVEDTPVVQPERLVPRRPAPPVPVPARIPSPPCTSTNGSTTSIQSLGEDQSASASSGAEISVDQVSLWSIPSATGFDVRTSSSLSLEQPTFPTMVVEAEIHASQGSLWSIPSITGSETRAPSPPSQDSRPSTPSASGSHTSVDLITFDSVAEILEDFSRSPFQFLSEIKPIPAPRTRVNNMSRSADTIKPIPKPRKCQVKYTQPPGVARVISAAEFDEFVRRHSNXRYEAGAYIFSSETGQGHLQQKSTRQCKLQYPILERSVHEKFYAPRLDLEREKLLQKKLQLCASEGNRSRYQSRKVENMKAITVERLLQGIGSYLSAEPQPVECYKVTYPAPMYSSTASNSFSSAEVAVKVCNLVLQENFPTVASYNITDEYDAYLDMVDGASCCLDTATFCPAKLRSFPKKHSYLRPEIRSAVPSPIQNTLQNVLAAATKRNCNVTQMRELPVLDSAAFNVECFKKYACNDEYWDFYKTNPIRLTAENVTQYVTKLKGPKAAALFAKTHNLQPLHEIPMDRFVMDLKRDVKVTPGTKHTEERPKVQVIQAADPLATAYLCGIHRELVRRLNAVLLPNIHTLFDMSAEDFDAIIAEHFQFGDAVLETDIASFDKSEDDAIAMSALMILEDLGVDQALLNLIEAAFGNITSVHLPTGTRFKFGAMMKSGMFLTLFINTVVNIMIASRVLRERLTTSPCAAFIGDDNIVKGVTSDALMAERCATWLNMEVKIIDAVVGVKAPYFCGGFIVVDQITGTACRVADPLKRLFKLGKPLPLDDDQDVDRRRALHDEAARWNRIGITEELVKAVESRYEVNYVSLIITALTTLASSVSNFKHIRGHPITLYG.

The Alphavirus-like MT domain occupies 28–257; the sequence is EATQVTDNDH…EERILLRSWH (230 aa). The segment at 242–261 is nsP1 membrane-binding; that stretch reads GSTIYTEERILLRSWHLPNV. Cys-417 carries the S-palmitoyl cysteine; by host lipid modification. The (+)RNA virus helicase ATP-binding domain occupies 674-839; it reads CVKKGDAGPM…HEICTEVYHK (166 aa). 719 to 726 provides a ligand contact to a ribonucleoside 5'-triphosphate; it reads GVPGSGKS. In terms of domain architecture, (+)RNA virus helicase C-terminal spans 840 to 988; that stretch reads SISRRCTKTV…LEEWQAEHDA (149 aa). Residues 1001-1320 enclose the Peptidase C9 domain; that stretch reads DVFQNKVNVC…VVLNNIYQGS (320 aa). The tract at residues 1002–1021 is nucleolus localization signal; the sequence is VFQNKVNVCWAKALEPVLAT. Cys-1010 serves as the catalytic For cysteine protease nsP2 activity. A Nuclear export signal motif is present at residues 1054 to 1063; that stretch reads TRFFGVDIDS. Catalysis depends on His-1079, which acts as the For cysteine protease nsP2 activity. The Nuclear localization signal signature appears at 1177-1181; that stretch reads PGKRV. The 159-residue stretch at 1328–1486 folds into the Macro domain; the sequence is APAYRVVRGD…RIKEAITRKE (159 aa). Asp-1337, Asn-1351, Gly-1359, Gly-1438, Ile-1439, and Tyr-1440 together coordinate ADP-D-ribose. Residues Cys-1589, Cys-1591, Cys-1614, and Cys-1632 each coordinate Zn(2+). Disordered regions lie at residues 1667 to 1711 and 1764 to 1794; these read LVPR…ASSG and IPSI…GSHT. The segment covering 1671–1686 has biased composition (pro residues); the sequence is RPAPPVPVPARIPSPP. The span at 1687–1711 shows a compositional bias: polar residues; that stretch reads CTSTNGSTTSIQSLGEDQSASASSG. The segment at 1798–1810 is binding to host G3BP family members; the sequence is LITFDSVAEILED. A binding to host FXR family members region spans residues 1858–1874; it reads PPGVARVISAAEFDEFV. The region spanning 2252 to 2367 is the RdRp catalytic domain; it reads AVLETDIASF…GVTSDALMAE (116 aa).

As to quaternary structure, interacts with non-structural protein 3. Interacts with RNA-directed RNA polymerase nsP4. Interacts with protease nsP2. interacts with itself. Interacts with mRNA-capping enzyme nsP1. Interacts with host DDX1. Interacts with host DDX3. Interacts (via C-terminus) with host FXR1; this interaction inhibits the formation of host stress granules on viral mRNAs and the nsp3-FXR1 complexes bind viral RNAs and probably orchestrate the assembly of viral replication complexes. Interacts (via C-terminus) with host FXR2; this interaction inhibits the formation of host stress granules on viral mRNAs and the nsp3-FXR2 complexes bind viral RNAs and probably orchestrate the assembly of viral replication complexes. Interacts (via C-terminus) with host FMR1; this interaction inhibits the formation of host stress granules on viral mRNAs and the nsp3-FMR1 complexes bind viral RNAs and probably orchestrate the assembly of viral replication complexes. Interacts (via C-terminus) with host G3BP1; this interaction inhibits the formation of host stress granules on viral mRNAs and the nsp3-G3BP1 complexes bind viral RNAs and probably orchestrate the assembly of viral replication complexes. Interacts (via C-terminus) with host G3BP2; this interaction inhibits the formation of host stress granules on viral mRNAs and the nsp3-G3BP2 complexes bind viral RNAs and probably orchestrate the assembly of viral replication complexes. In terms of assembly, interacts with mRNA-capping enzyme nsP1. Interacts with protease nsP2. interacts with itself. As to quaternary structure, interacts with RNA-directed RNA polymerase nsP4. Interacts with mRNA-capping enzyme nsP1. Interacts with KPNA1/karyopherin-alpha1; this interaction probably allows the active transport of protease nsP2 into the host nucleus. Mg(2+) is required as a cofactor. Requires Mn(2+) as cofactor. In terms of processing, specific enzymatic cleavages in vivo yield mature proteins. The processing of the polyprotein is temporally regulated. In early stages (1.7 hpi), P1234 is first cleaved in trans through its nsP2 protease activity, releasing P123' and nsP4, which associate to form the early replication complex. At the same time, P1234 is also cut at the nsP1/nsP2 site early in infection but with lower efficiency. After replication of the viral minus-strand RNAs (4 hpi), the polyproteins are cut at the nsP1/nsP2 and nsP2/nsP3 sites very efficiently, preventing accumulation of P123' and P1234 and allowing the formation of the late replication complex. NsP3'/nsP4 site is not cleaved anymore and P34 is produced rather than nsP4. Post-translationally, specific enzymatic cleavages in vivo yield mature proteins. The processing of the polyprotein is temporally regulated. In early stages (1.7 hpi), P123 is cleaved at the nsP1/nsP2 site with low efficiency. After replication of the viral minus-strand RNAs (4 hpi), the polyproteins are cut at the nsP1/nsP2 and nsP2/nsP3 sites very efficiently, preventing accumulation of P123 and allowing the formation of the late replication complex. Specific enzymatic cleavages in vivo yield mature proteins. The processing of the polyprotein is temporally regulated. In early stages (1.7 hpi), P123' is cleaved at the nsP1/nsP2 site with low efficiency. After replication of the viral minus-strand RNAs (4 hpi), the polyproteins are cut at the nsP1/nsP2 and nsP2/nsP3 sites very efficiently, preventing accumulation of P123' and allowing the formation of the late replication complex. In terms of processing, palmitoylated by host palmitoyltransferases ZDHHC2 and ZDHHC19. Post-translationally, phosphorylated by host on serines and threonines. Ubiquitinated; targets the protein for rapid degradation via the ubiquitin system. Nsp4 is present in extremely low quantities due to low frequency of translation through the amber stop-codon and the degradation by the ubiquitin pathway.

It is found in the host cytoplasmic vesicle membrane. Its subcellular location is the host cell membrane. The protein resides in the host cell projection. The protein localises to the host filopodium. It localises to the host nucleus. It is found in the host cytoplasm. It carries out the reaction GTP + S-adenosyl-L-methionine = N(7)-methyl-GTP + S-adenosyl-L-homocysteine. It catalyses the reaction N(7)-methyl-GTP + L-histidyl-[protein] = N(tele)-(N(7)-methylguanosine 5'-phospho)-L-histidyl-[protein] + diphosphate. The catalysed reaction is N(tele)-(N(7)-methylguanosine 5'-phospho)-L-histidyl-[protein] + a 5'-end diphospho-(purine-ribonucleoside) in mRNA + H(+) = a 5'-end (N(7)-methyl 5'-triphosphoguanosine)-(purine-ribonucleoside) in mRNA + L-histidyl-[protein]. The enzyme catalyses a 5'-end triphospho-ribonucleoside in mRNA + H2O = a 5'-end diphospho-ribonucleoside in mRNA + phosphate + H(+). It carries out the reaction a ribonucleoside 5'-triphosphate + H2O = a ribonucleoside 5'-diphosphate + phosphate + H(+). It catalyses the reaction ATP + H2O = ADP + phosphate + H(+). The catalysed reaction is RNA(n) + a ribonucleoside 5'-triphosphate = RNA(n+1) + diphosphate. The enzyme catalyses 4-O-(ADP-D-ribosyl)-L-aspartyl-[protein] + H2O = L-aspartyl-[protein] + ADP-D-ribose + H(+). It carries out the reaction 5-O-(ADP-D-ribosyl)-L-glutamyl-[protein] + H2O = L-glutamyl-[protein] + ADP-D-ribose + H(+). It catalyses the reaction RNA(n) + ATP = RNA(n)-3'-adenine ribonucleotide + diphosphate. The catalysed reaction is ADP-alpha-D-ribose 1''-phosphate + H2O = ADP-D-ribose + phosphate. Inhibited by sinefungin. Its function is as follows. Inactive precursor of the viral replicase, which is activated by cleavages carried out by the viral protease nsP2. Functionally, the early replication complex formed by the polyprotein P123 and nsP4 synthesizes the minus-strand RNAs (antigenome). Polyprotein P123 is a short-lived polyprotein that accumulates during early stage of infection. As soon P123 is cleaved into mature proteins, the plus-strand RNAs synthesis begins. The early replication complex formed by the polyprotein P123' and nsP4 synthesizes minus-strand RNAs (antigenome). Polyprotein P123' is a short-lived polyprotein that accumulates during early stage of infection. As soon P123' is cleaved into mature proteins, the plus-strand RNAs synthesis begins. In terms of biological role, cytoplasmic capping enzyme that catalyzes two virus-specific reactions: methyltransferase and nsP1 guanylyltransferase. mRNA-capping is necessary since all viral RNAs are synthesized in the cytoplasm, and host capping enzymes are restricted to the nucleus. The enzymatic reaction involves a covalent link between 7-methyl-GMP and nsP1, whereas eukaryotic capping enzymes form a covalent complex only with GMP. NsP1 capping consists in the following reactions: GTP is first methylated into 7-methyl-GMP and then is covalently linked to nsP1 to form the m7GMp-nsP1 complex from which 7-methyl-GMP complex is transferred to the mRNA to create the cap structure. NsP1 is also needed for the initiation of the minus-strand RNAs synthesis. Probably serves as a membrane anchor for the replication complex composed of nsP1-nsP4. Nsp1 is needed for the initiation of the minus-strand RNAs synthesis. Palmitoylated nsP1 is remodeling host cell cytoskeleton, and induces filopodium-like structure formation at the surface of the host cell. Its function is as follows. Multifunctional protein whose N-terminus is part of the RNA polymerase complex and displays NTPase, RNA triphosphatase and helicase activities. NTPase and RNA triphosphatase are involved in viral RNA capping and helicase keeps a check on the dsRNA replication intermediates. The C-terminus harbors a protease that specifically cleaves the polyproteins and releases the mature proteins. Required for the shutoff of minus-strand RNAs synthesis. Inhibits host translation to ensure maximal viral gene expression and evade host immune response. Functionally, seems to be essential for minus-strand RNAs and subgenomic 26S mRNAs synthesis. Displays mono-ADP-ribosylhydrolase activity. ADP-ribosylation is a post-translational modification that controls various processes of the host cell and the virus probably needs to revert it for optimal viral replication. Binds proteins of FXR and G3BP families and sequesters them into the viral RNA replication complexes thereby inhibiting the formation of host stress granules on viral mRNAs. The nsp3-FXR and nsp3-G3BP complexes bind viral RNAs and probably orchestrate the assembly of viral replication complexes, thanks to the ability of G3BP and FXR family members to self-assemble and bind DNA. Seems to be essential for minus-strand RNAs and subgenomic 26S mRNAs synthesis. Displays mono-ADP-ribosylhydrolase activity. ADP-ribosylation is a post-translational modification that controls various processes of the host cell and the virus probably needs to revert it for optimal viral replication. Binds proteins of FXR family and sequesters them into the viral RNA replication complexes thereby inhibiting the formation of host stress granules on viral mRNAs. The nsp3'-FXR complexes bind viral RNAs and probably orchestrate the assembly of viral replication complexes, thanks to the ability of FXR family members to self-assemble and bind DNA. In terms of biological role, RNA dependent RNA polymerase. Replicates genomic and antigenomic RNA by recognizing replications specific signals. The early replication complex formed by the polyprotein P123 and nsP4 synthesizes minus-strand RNAs. The late replication complex composed of fully processed nsP1-nsP4 is responsible for the production of genomic and subgenomic plus-strand RNAs. This Aedes (Human) protein is Polyprotein P1234.